The sequence spans 214 residues: DNA-directed RNA polymerase subunit alpha (214 aa).

Belongs to the RNA polymerase alpha chain family. As to quaternary structure, in plastids the minimal PEP RNA polymerase catalytic core is composed of four subunits: alpha, beta, beta', and beta''. When a (nuclear-encoded) sigma factor is associated with the core the holoenzyme is formed, which can initiate transcription.

The protein localises to the plastid. It is found in the chloroplast. It carries out the reaction RNA(n) + a ribonucleoside 5'-triphosphate = RNA(n+1) + diphosphate. Its function is as follows. DNA-dependent RNA polymerase catalyzes the transcription of DNA into RNA using the four ribonucleoside triphosphates as substrates. In Euglena viridis (Cercaria viridis), this protein is DNA-directed RNA polymerase subunit alpha (rpoA).